Consider the following 211-residue polypeptide: 1-deoxy-D-xylulose 5-phosphate reductoisomerase (211 aa).

Position 14 (Asp-14) interacts with Mn(2+). 8 residues coordinate 1-deoxy-D-xylulose 5-phosphate: Ser-15, Glu-16, Ser-40, His-63, Ser-76, Asn-81, Lys-82, and Glu-85. Glu-16 lines the Mn(2+) pocket. Residue Glu-85 participates in Mn(2+) binding.

This sequence belongs to the DXR family. It depends on Mn(2+) as a cofactor. Mg(2+) serves as cofactor. As to expression, mostly expressed in flowers and, to a lower extent, in leaves.

It is found in the plastid. The protein localises to the chloroplast stroma. It catalyses the reaction 2-C-methyl-D-erythritol 4-phosphate + NADP(+) = 1-deoxy-D-xylulose 5-phosphate + NADPH + H(+). Its pathway is isoprenoid biosynthesis; isopentenyl diphosphate biosynthesis via DXP pathway; isopentenyl diphosphate from 1-deoxy-D-xylulose 5-phosphate: step 1/6. Enzyme of the plastid non-mevalonate pathway for isoprenoid biosynthesis that catalyzes the NADPH-dependent rearrangement and reduction of 1-deoxy-D-xylulose-5-phosphate (DXP) to 2-C-methyl-D-erythritol 4-phosphate (MEP). Required for chloroplast development. This Thymus vulgaris (Thyme) protein is 1-deoxy-D-xylulose 5-phosphate reductoisomerase.